A 1166-amino-acid chain; its full sequence is ATP-dependent helicase/deoxyribonuclease subunit B (1166 aa).

The UvrD-like helicase ATP-binding domain occupies 1–278; sequence MGAEFLVGRS…LNLDITYKEL (278 aa). Residues S10, G11, K14, T15, K16, T236, and R283 each coordinate ATP. Residues 281–586 enclose the UvrD-like helicase C-terminal domain; it reads TERHTKTPEL…TFSLIPPALD (306 aa). The [4Fe-4S] cluster site is built by C801, C1121, C1124, and C1130.

The protein belongs to the helicase family. AddB/RexB type 1 subfamily. In terms of assembly, heterodimer of AddA and AddB. The cofactor is At low magnesium concentrations there is no nuclease activity, but helicase activity is unaffected.. Requires Mg(2+) as cofactor. [4Fe-4S] cluster is required as a cofactor.

Functionally, the heterodimer acts both as a highly processive, ATP-dependent DNA helicase and as an ATP-dependent single-stranded exonuclease, acting in both directions. Recognizes the B.subtilis Chi site (5'-AGCGG-3') which transforms the enzyme from a helicase which degrades both DNA strands to one with only 5' to 3' exonuclease activity. This generates a double-stranded DNA with a protruding 3'-terminated single-stranded tail suitable for the initiation of homologous recombination (Chi fragment). The AddB nuclease domain is not required for Chi fragment generation but for recognition of the Chi site; this subunit has 5' -&gt; 3' nuclease activity but no helicase activity. The helicase activity of isolated AddA acts on 3'-tailed substrate and requires AddB to bind to blunt-ended DNA. RecA thread formation during DNA double-strand break repair requires RecJ or AddAB. This chain is ATP-dependent helicase/deoxyribonuclease subunit B, found in Bacillus subtilis (strain 168).